The primary structure comprises 252 residues: Tabtoxin biosynthesis enzyme (252 aa).

A disordered region spans residues 1–23 (MYQRTATQLARKPASKQGETEMN).

Its function is as follows. May play a role in tabtoxin biosynthesis. This chain is Tabtoxin biosynthesis enzyme (tblA), found in Pseudomonas amygdali pv. tabaci (Pseudomonas syringae pv. tabaci).